The sequence spans 354 residues: Cyclin-D1-2 (354 aa).

Disordered stretches follow at residues 37–74 (FFQQ…EEEE) and 331–354 (TTAT…RRKM). 2 stretches are compositionally biased toward low complexity: residues 44 to 66 (PAPA…AGSC) and 331 to 346 (TTAT…VSSS).

Belongs to the cyclin family. Cyclin D subfamily.

The polypeptide is Cyclin-D1-2 (CYCD1-2) (Oryza sativa subsp. japonica (Rice)).